The following is a 279-amino-acid chain: UTP--glucose-1-phosphate uridylyltransferase (279 aa).

The protein belongs to the UDPGP type 2 family.

It catalyses the reaction alpha-D-glucose 1-phosphate + UTP + H(+) = UDP-alpha-D-glucose + diphosphate. May play a role in stationary phase survival. This is UTP--glucose-1-phosphate uridylyltransferase (galU) from Pseudomonas aeruginosa.